Here is a 59-residue protein sequence, read N- to C-terminus: Large ribosomal subunit protein uL30 (59 aa).

This sequence belongs to the universal ribosomal protein uL30 family. In terms of assembly, part of the 50S ribosomal subunit.

In Bacillus licheniformis (strain ATCC 14580 / DSM 13 / JCM 2505 / CCUG 7422 / NBRC 12200 / NCIMB 9375 / NCTC 10341 / NRRL NRS-1264 / Gibson 46), this protein is Large ribosomal subunit protein uL30.